A 396-amino-acid polypeptide reads, in one-letter code: Alanine racemase (396 aa).

Lysine 46 serves as the catalytic Proton acceptor; specific for D-alanine. Lysine 46 is subject to N6-(pyridoxal phosphate)lysine. Arginine 145 provides a ligand contact to substrate. Catalysis depends on tyrosine 280, which acts as the Proton acceptor; specific for L-alanine. Residue methionine 328 coordinates substrate.

It belongs to the alanine racemase family. Pyridoxal 5'-phosphate serves as cofactor.

It catalyses the reaction L-alanine = D-alanine. The protein operates within amino-acid biosynthesis; D-alanine biosynthesis; D-alanine from L-alanine: step 1/1. Functionally, catalyzes the interconversion of L-alanine and D-alanine. May also act on other amino acids. This is Alanine racemase (alr) from Brucella canis (strain ATCC 23365 / NCTC 10854 / RM-666).